The chain runs to 140 residues: Putative pre-16S rRNA nuclease (140 aa).

It belongs to the YqgF nuclease family.

The protein localises to the cytoplasm. Functionally, could be a nuclease involved in processing of the 5'-end of pre-16S rRNA. This Chlorobium chlorochromatii (strain CaD3) protein is Putative pre-16S rRNA nuclease.